The primary structure comprises 569 residues: Cytochrome P450 monooxygenase abl1 (569 aa).

Cys464 contacts heme.

The protein belongs to the cytochrome P450 family. Heme serves as cofactor.

It participates in hormone biosynthesis. Cytochrome P450 monooxygenase; part of the gene cluster that mediates the biosynthesis of abscisic acid (ABA), a phytohormone that acts antagonistically toward salicylic acid (SA), jasmonic acid (JA) and ethylene (ETH) signaling, to impede plant defense responses. The first step of the pathway catalyzes the reaction from farnesyl diphosphate to alpha-ionylideneethane performed by the alpha-ionylideneethane synthase abl3 via a three-step reaction mechanism involving 2 neutral intermediates, beta-farnesene and allofarnesene. The cytochrome P450 monooxygenase abl1 might then be involved in the conversion of alpha-ionylideneethane to alpha-ionylideneacetic acid. Alpha-ionylideneacetic acid is further converted to abscisic acid in 2 steps involving the cytochrome P450 monooxygenase abl2 and the short-chain dehydrogenase/reductase abl4, via the intermediates 1'-deoxy-ABA or 1',4'-trans-diol-ABA, depending on the order of action of these 2 enzymes. Abl2 is responsible for the hydroxylation of carbon atom C-1' and abl4 might be involved in the oxidation of the C-4' carbon atom. This chain is Cytochrome P450 monooxygenase abl1, found in Leptosphaeria maculans (strain JN3 / isolate v23.1.3 / race Av1-4-5-6-7-8) (Blackleg fungus).